A 223-amino-acid chain; its full sequence is uncharacterized protein (223 aa).

A run of 5 helical transmembrane segments spans residues 28–48 (LSNT…GLIT), 59–79 (LIVQ…ITLA), 88–108 (AFNQ…MFFI), 128–148 (IVGL…VWLS), and 176–196 (AWAI…YMIV).

The protein localises to the cell membrane. This is an uncharacterized protein from Mycoplasma pneumoniae (strain ATCC 29342 / M129 / Subtype 1) (Mycoplasmoides pneumoniae).